The sequence spans 451 residues: MLAVTFTAAAVLSLLAASGRTLNLDVDDLQSIREATSLLATGLMDYYHGHDYGETVGKFSDPYYWWEAGGAWGSILDYWYYMENSTYNDLLTDSLLHQAGEDLSYTPWNETTTEGNDDQFFWGMAVMAAAERNFPNPPADQPQWLALAQAVFNTMALRWDMETCNGGLRWQIFRWNDGYHYKNSVSNGALFHMAARLTRYTGNATYLEWAERVYDWMYGVGLISIVQPNWHVVYDGTDINDNCTNLNKLQWTYNHGLIMAGCAFIYNHTQDELWHQRTLRFLDSARIFLSNDTLYEAGCQGGDNCNIDQRSFKAYFSRFLGLTAQLVPESRETIVRWIRASAQGAAASCSGGRDGHTCGLNWLINGWDGKWGLGEQMAALEIIQNLRCLERPAPYTAMNGGTSPGDPAAGTKTKAENLPPLDIKAGDRAGAGIITALIGSSFLACTLWLII.

The signal sequence occupies residues 1 to 21 (MLAVTFTAAAVLSLLAASGRT). Residues asparagine 84, asparagine 109, asparagine 203, asparagine 242, asparagine 267, and asparagine 291 are each glycosylated (N-linked (GlcNAc...) asparagine). Residues 397–419 (AMNGGTSPGDPAAGTKTKAENLP) form a disordered region. Aspartate 427 carries the GPI-anchor amidated aspartate lipid modification. A propeptide spans 428–451 (RAGAGIITALIGSSFLACTLWLII) (removed in mature form).

It belongs to the glycosyl hydrolase 76 family.

It is found in the secreted. The protein resides in the cell wall. It localises to the cell membrane. It catalyses the reaction Random hydrolysis of (1-&gt;6)-alpha-D-mannosidic linkages in unbranched (1-&gt;6)-mannans.. Functionally, required for normal synthesis of the cell wall. This is Mannan endo-1,6-alpha-mannosidase DCW1 (DCW1) from Eremothecium gossypii (strain ATCC 10895 / CBS 109.51 / FGSC 9923 / NRRL Y-1056) (Yeast).